We begin with the raw amino-acid sequence, 794 residues long: Protein sel-1 homolog 1 (794 aa).

The signal sequence occupies residues 1-21; that stretch reads MRVRIGLTLLLCAVLLSLASA. The interval 21-50 is disordered; sequence ASSDEEGSQDESLDSKTTLTSDESVKDHTT. An interaction with ERLEC1, OS9 and SYVN1 region spans residues 22–737; that stretch reads SSDEEGSQDE…DMFTQLDMDQ (716 aa). At 22 to 738 the chain is on the lumenal side; the sequence is SSDEEGSQDE…MFTQLDMDQL (717 aa). Positions 23–32 are enriched in acidic residues; it reads SDEEGSQDES. S63 carries the post-translational modification Phosphoserine. Residues 64–77 show a composition bias toward acidic residues; it reads EESELESSIQEEED. The disordered stretch occupies residues 64–109; it reads EESELESSIQEEEDSLKSQEGESVTEDISFLESPNPENKDYEEPKK. The region spanning 122–170 is the Fibronectin type-II domain; the sequence is AHGEPCHFPFLFLDKEYDECTSDGREDGRLWCATTYDYKADEKWGFCET. Cystine bridges form between C127–C153 and C141–C168. Sel1-like repeat units follow at residues 183-218, 219-254, 255-290, 291-326, 373-409, 410-446, 447-482, 483-518, and 519-554; these read AEMM…SMNH, TKAL…EEGS, PKGQ…LGGN, LIAH…NHVA, VQAQ…NAGN, SHAM…DMGN, PVGQ…EQGW, VDGQ…QGGH, and ILAF…ERGR. 2 N-linked (GlcNAc...) asparagine glycosylation sites follow: N195 and N217. N-linked (GlcNAc...) asparagine glycosylation occurs at N272. The interval 352–537 is important for homodimerization and oligomerization; the sequence is NSGMLEEDLI…MHASGTGVMR (186 aa). N431 carries an N-linked (GlcNAc...) asparagine glycan. N608 is a glycosylation site (N-linked (GlcNAc...) asparagine). Sel1-like repeat units follow at residues 627–662 and 664–699; these read TVAR…EQQH and AQAM…EASP. Residues 643 to 723 are interaction with SYVN1; it reads TDVDYETAFI…VVYFLQYIRE (81 aa). The segment at 738-794 is mediates retention in the endoplasmic reticulum; it reads LLGPEWDLYLMTIIALLLGTVIAYRQRQHQDMPAPRPPGPRPAPPQQEGPPEQQPPQ. Residues 739–759 form a helical membrane-spanning segment; the sequence is LGPEWDLYLMTIIALLLGTVI. Residues 760–794 lie on the Cytoplasmic side of the membrane; it reads AYRQRQHQDMPAPRPPGPRPAPPQQEGPPEQQPPQ. A disordered region spans residues 766–794; it reads HQDMPAPRPPGPRPAPPQQEGPPEQQPPQ. Pro residues predominate over residues 771 to 794; the sequence is APRPPGPRPAPPQQEGPPEQQPPQ.

It belongs to the sel-1 family. As to quaternary structure, homodimer and homooligomer. May form a complex with ERLEC1, HSPA5, OS9, and SYVN1. Interacts with FOXRED2 and EDEM1. Interacts with LPL. Interacts with LMF1; may stabilize the complex formed by LPL and LMF1 and thereby promote the export of LPL dimers. Component of the HRD1 complex, which comprises at least SYNV1/HRD1, DERL1/2, FAM8A1, HERPUD1/HERP, OS9, SEL1L and UBE2J1. SYNV1 assembles with SEL1L and FAM8A1 through its transmembrane domains, but interaction with its cytoplasmic domain is required to confer stability to FAM8A1 and enhance recruitment of HERPUD1. The interaction with SYNV1/HRD1 is direct. (Microbial infection) Interacts with human cytomegalovirus protein UL148. Post-translationally, N-glycosylated. Highly expressed in pancreas.

The protein localises to the endoplasmic reticulum membrane. Functionally, plays a role in the endoplasmic reticulum quality control (ERQC) system also called ER-associated degradation (ERAD) involved in ubiquitin-dependent degradation of misfolded endoplasmic reticulum proteins. Enhances SYVN1 stability. Plays a role in LPL maturation and secretion. Required for normal differentiation of the pancreas epithelium, and for normal exocrine function and survival of pancreatic cells. May play a role in Notch signaling. In Homo sapiens (Human), this protein is Protein sel-1 homolog 1.